Here is a 120-residue protein sequence, read N- to C-terminus: Flagellar protein FliT (120 aa).

Residues 1–50 form a required for homodimerization region; it reads MERHQHLLSEYQQILTLSEQMLMLATVENWNTLVDLEMTYLKAVENTANI. The tract at residues 60 to 98 is fliD binding; sequence LQELLRQKLRSILENEIEIKRLLQRRLDKLSELVGQSTR.

Belongs to the FliT family. As to quaternary structure, homodimer. Interacts with FliD and FlhC.

It localises to the cytoplasm. It is found in the cytosol. Dual-function protein that regulates the transcription of class 2 flagellar operons and that also acts as an export chaperone for the filament-capping protein FliD. As a transcriptional regulator, acts as an anti-FlhDC factor; it directly binds FlhC, thus inhibiting the binding of the FlhC/FlhD complex to class 2 promoters, resulting in decreased expression of class 2 flagellar operons. As a chaperone, effects FliD transition to the membrane by preventing its premature polymerization, and by directing it to the export apparatus. This chain is Flagellar protein FliT, found in Yersinia pestis (strain Pestoides F).